We begin with the raw amino-acid sequence, 35 residues long: Conotoxin Cal6.1c (35 aa).

A propeptide spanning residues 1-35 (GLNRPSKRCLAGSAPCEFHKRSTCCSGHCIIWWCA) is cleaved from the precursor. 3 disulfides stabilise this stretch: Cys9–Cys25, Cys16–Cys29, and Cys24–Cys34.

It belongs to the conotoxin O1 superfamily. In terms of tissue distribution, expressed by the venom duct.

It localises to the secreted. In terms of biological role, probable neurotoxin with unknown target. Possibly targets ion channels. This is Conotoxin Cal6.1c from Californiconus californicus (California cone).